A 756-amino-acid polypeptide reads, in one-letter code: MVVTRSARAKASIQAASAESSGQKSFAANGIQAHPESSTGSDARTTAESQTTGKQSLIPRTPKARKRKSRTTGSLPKGTEPSTDGETSEAESNYSVSEHHDTILRVTRRRQILIACSPVSSVRKKPKVTPTKESYTEEIVSEAESHVSGISRIVLPTEKTTGARRSKAKSLTDPSQESHTEAISDAETSSSDISFSGIATRRTRSMQRKLKAQTEKKDSKIVPGNEKQIVGTPVNSEDSDTRQTSHLQARSLSEINKPNFYNNDFDDDFSHRSSENILTVHEQANVESLKETKQNCKDLDEDANGITDEGKEINEKSSQLKNLSELQDTSLQQLVSQRHSTPQNKNAVSVHSNLNSEAVMKSLTQTFATVEVGRWNNNKKSPIKASDLTKFGDCGGSDDEEESTVISVSEDMNSEGNVDFECDTKLYTSAPNTSQGKDNSVLLVLSSDESQQSENSENEEDTLCFVENSGQRESLSGDTGSLSCDNALFVIDTTPGMSADKNFYLEEEDKASEVAIEEEKEEEEDEKSEEDSSDHDENEDEFSDEEDFLNSTKAKLLKLTSSSIDPGLSIKQLGGLYINFNADKLQSNKRTLTQIKEKKKNELLQKAVITPDFEKNHCVPPYSESKYQLQKKRRKERQKTAGDGWFGMKAPEMTNELKNDLKALKMRASMDPKRFYKKNDRDGFPKYFQIGTIVDNPADFYHSRIPKKQRKRTIVEELLADSEFRRYNRRKYSEIMAEKAANAAGKKFRKKKKFRN.

Residues 1-99 are disordered; it reads MVVTRSARAK…AESNYSVSEH (99 aa). The span at 9-21 shows a compositional bias: low complexity; it reads AKASIQAASAESS. At serine 21 the chain carries Phosphoserine. Polar residues-rich tracts occupy residues 35 to 55 and 80 to 96; these read PESSTGSDARTTAESQTTGKQ and EPSTDGETSEAESNYSV. The residue at position 117 (serine 117) is a Phosphoserine. Position 129 is a phosphothreonine (threonine 129). A phosphoserine mark is found at serine 141, serine 145, serine 148, serine 184, and serine 194. Residues 156 to 261 are disordered; that stretch reads PTEKTTGARR…LSEINKPNFY (106 aa). The span at 201–211 shows a compositional bias: basic residues; that stretch reads RRTRSMQRKLK. Glycyl lysine isopeptide (Lys-Gly) (interchain with G-Cter in SUMO2) cross-links involve residues lysine 217 and lysine 220. Phosphothreonine is present on threonine 232. A phosphoserine mark is found at serine 239, serine 251, and serine 253. Polar residues predominate over residues 242-256; it reads RQTSHLQARSLSEIN. Glycyl lysine isopeptide (Lys-Gly) (interchain with G-Cter in SUMO2) cross-links involve residues lysine 257, lysine 316, and lysine 321. Phosphoserine occurs at positions 324 and 330. Residue lysine 345 forms a Glycyl lysine isopeptide (Lys-Gly) (interchain with G-Cter in SUMO2) linkage. At serine 381 the chain carries Phosphoserine. A Glycyl lysine isopeptide (Lys-Gly) (interchain with G-Cter in SUMO2) cross-link involves residue lysine 384. Residues serine 434 and serine 512 each carry the phosphoserine modification. Residues 505–542 are a coiled coil; that stretch reads LEEEDKASEVAIEEEKEEEEDEKSEEDSSDHDENEDEF. Positions 510–547 are disordered; that stretch reads KASEVAIEEEKEEEEDEKSEEDSSDHDENEDEFSDEED. The interval 548 to 605 is tdBR region; mediates interaction with DNTT; sequence FLNSTKAKLLKLTSSSIDPGLSIKQLGGLYINFNADKLQSNKRTLTQIKEKKKNELLQ. A Glycyl lysine isopeptide (Lys-Gly) (interchain with G-Cter in SUMO2) cross-link involves residue lysine 558. Serine 569 is subject to Phosphoserine. Glycyl lysine isopeptide (Lys-Gly) (interchain with G-Cter in SUMO2) cross-links involve residues lysine 584 and lysine 606. The residue at position 610 (threonine 610) is a Phosphothreonine. Residues lysine 626, lysine 649, lysine 658, lysine 686, and lysine 731 each participate in a glycyl lysine isopeptide (Lys-Gly) (interchain with G-Cter in SUMO2) cross-link.

Forms a ternary complex with DNTT and core histone; interaction with PCNA releases DNTT and H2A/H2B histones from this ternary complex. Interacts with ESR1, ESR2, PPARG and RXRA. Part of the small subunit (SSU) processome, composed of more than 70 proteins and the RNA chaperone small nucleolar RNA (snoRNA) U3. In terms of tissue distribution, widely expressed with higher levels in testis.

Its subcellular location is the nucleus. It is found in the nucleolus. In terms of biological role, regulates the transcriptional activity of DNTT and ESR1. May function as a chromatin remodeling protein. Part of the small subunit (SSU) processome, first precursor of the small eukaryotic ribosomal subunit. During the assembly of the SSU processome in the nucleolus, many ribosome biogenesis factors, an RNA chaperone and ribosomal proteins associate with the nascent pre-rRNA and work in concert to generate RNA folding, modifications, rearrangements and cleavage as well as targeted degradation of pre-ribosomal RNA by the RNA exosome. In Homo sapiens (Human), this protein is Deoxynucleotidyltransferase terminal-interacting protein 2.